A 119-amino-acid polypeptide reads, in one-letter code: UPF0145 protein Ta0182 (119 aa).

Belongs to the UPF0145 family.

This chain is UPF0145 protein Ta0182, found in Thermoplasma acidophilum (strain ATCC 25905 / DSM 1728 / JCM 9062 / NBRC 15155 / AMRC-C165).